A 495-amino-acid chain; its full sequence is Syntaphilin (495 aa).

The disordered stretch occupies residues 1 to 74 (MAMSLQGSRR…HGIKPPTPEQ (74 aa)). Over residues 7-49 (GSRRASAGSRRRTSPPVSVRDAYGTSSLSSSSNSGSCKGSDSS) the composition is skewed to low complexity. Residues 79-161 (LQQKEVCIRH…VKNNLIDKDK (83 aa)) adopt a coiled-coil conformation. The interval 191-244 (VAKEEGTGESAGGSPARSLTRSSTYTKLSDPAVCGDRQPGDPSNTSAEDGADSG) is disordered. Phosphoserine is present on residues S200 and S204. The span at 207–217 (RSLTRSSTYTK) shows a compositional bias: polar residues. At T214 the chain carries Phosphothreonine. S219 is modified (phosphoserine). Phosphothreonine is present on T235. A helical transmembrane segment spans residues 427–446 (YIVDLLAVVVPAVPTVAWLC).

In terms of assembly, binds to STX1A. Interacts with DNM1; this interaction inhibits the binding of DNM1 to AMPH and DNM1-receptor-mediated endocytosis.

Its subcellular location is the membrane. It localises to the synapse. The protein localises to the synaptosome. Its function is as follows. Inhibits SNARE complex formation by absorbing free STX1A. The protein is Syntaphilin of Mus musculus (Mouse).